The primary structure comprises 236 residues: MNSLSYLNHELAKFPSPEFALTDPNGLLAIGGDLHPKRLLNAYYEGIFPWFNENDPILWWSPDPRAVFVPGSLKVSRSLKRDIKRRQWRFSVNRAFNSVIEHCALTRQGKEGTWITLEIQQAYKALHKYNKAHSIEVWDGDKLIGGLYGVAIGQVFCGESMFHLQSNASKAAMAMLHQHLLSHRYRLIDAQVMNPHLASLGAKALKRADFINLLKRFRDIEVASDAWHPQEVQIEL.

It belongs to the L/F-transferase family.

The protein localises to the cytoplasm. The catalysed reaction is N-terminal L-lysyl-[protein] + L-leucyl-tRNA(Leu) = N-terminal L-leucyl-L-lysyl-[protein] + tRNA(Leu) + H(+). It carries out the reaction N-terminal L-arginyl-[protein] + L-leucyl-tRNA(Leu) = N-terminal L-leucyl-L-arginyl-[protein] + tRNA(Leu) + H(+). The enzyme catalyses L-phenylalanyl-tRNA(Phe) + an N-terminal L-alpha-aminoacyl-[protein] = an N-terminal L-phenylalanyl-L-alpha-aminoacyl-[protein] + tRNA(Phe). Functions in the N-end rule pathway of protein degradation where it conjugates Leu, Phe and, less efficiently, Met from aminoacyl-tRNAs to the N-termini of proteins containing an N-terminal arginine or lysine. The polypeptide is Leucyl/phenylalanyl-tRNA--protein transferase (Shewanella loihica (strain ATCC BAA-1088 / PV-4)).